The primary structure comprises 424 residues: UDP-N-acetylglucosamine 1-carboxyvinyltransferase (424 aa).

Lys-22 to Asn-23 provides a ligand contact to phosphoenolpyruvate. Arg-93 serves as a coordination point for UDP-N-acetyl-alpha-D-glucosamine. Cys-117 serves as the catalytic Proton donor. A 2-(S-cysteinyl)pyruvic acid O-phosphothioketal modification is found at Cys-117. Residues Arg-122–Leu-126, Lys-162–Val-165, Asp-307, and Ile-329 each bind UDP-N-acetyl-alpha-D-glucosamine.

Belongs to the EPSP synthase family. MurA subfamily.

The protein resides in the cytoplasm. The catalysed reaction is phosphoenolpyruvate + UDP-N-acetyl-alpha-D-glucosamine = UDP-N-acetyl-3-O-(1-carboxyvinyl)-alpha-D-glucosamine + phosphate. The protein operates within cell wall biogenesis; peptidoglycan biosynthesis. Its function is as follows. Cell wall formation. Adds enolpyruvyl to UDP-N-acetylglucosamine. The chain is UDP-N-acetylglucosamine 1-carboxyvinyltransferase from Haemophilus influenzae (strain PittGG).